A 332-amino-acid chain; its full sequence is Holliday junction branch migration complex subunit RuvB (332 aa).

Residues 1 to 181 form a large ATPase domain (RuvB-L) region; it reads MTRFLDSDAM…FGITGHMEYY (181 aa). Residues L20, R21, G62, K65, T66, T67, 128–130, R171, Y181, and R218 contribute to the ATP site; that span reads EDF. Position 66 (T66) interacts with Mg(2+). The tract at residues 182–252 is small ATPAse domain (RuvB-S); it reads EENDLTEIIE…ITDKALTMLD (71 aa). The tract at residues 255–332 is head domain (RuvB-H); the sequence is HEGLDYVDQK…EHLGYQRFDK (78 aa). Residues R291, R310, R312, and R315 each coordinate DNA.

Belongs to the RuvB family. As to quaternary structure, homohexamer. Forms an RuvA(8)-RuvB(12)-Holliday junction (HJ) complex. HJ DNA is sandwiched between 2 RuvA tetramers; dsDNA enters through RuvA and exits via RuvB. An RuvB hexamer assembles on each DNA strand where it exits the tetramer. Each RuvB hexamer is contacted by two RuvA subunits (via domain III) on 2 adjacent RuvB subunits; this complex drives branch migration. In the full resolvosome a probable DNA-RuvA(4)-RuvB(12)-RuvC(2) complex forms which resolves the HJ.

The protein localises to the cytoplasm. It carries out the reaction ATP + H2O = ADP + phosphate + H(+). The RuvA-RuvB-RuvC complex processes Holliday junction (HJ) DNA during genetic recombination and DNA repair, while the RuvA-RuvB complex plays an important role in the rescue of blocked DNA replication forks via replication fork reversal (RFR). RuvA specifically binds to HJ cruciform DNA, conferring on it an open structure. The RuvB hexamer acts as an ATP-dependent pump, pulling dsDNA into and through the RuvAB complex. RuvB forms 2 homohexamers on either side of HJ DNA bound by 1 or 2 RuvA tetramers; 4 subunits per hexamer contact DNA at a time. Coordinated motions by a converter formed by DNA-disengaged RuvB subunits stimulates ATP hydrolysis and nucleotide exchange. Immobilization of the converter enables RuvB to convert the ATP-contained energy into a lever motion, pulling 2 nucleotides of DNA out of the RuvA tetramer per ATP hydrolyzed, thus driving DNA branch migration. The RuvB motors rotate together with the DNA substrate, which together with the progressing nucleotide cycle form the mechanistic basis for DNA recombination by continuous HJ branch migration. Branch migration allows RuvC to scan DNA until it finds its consensus sequence, where it cleaves and resolves cruciform DNA. This Streptococcus agalactiae serotype Ia (strain ATCC 27591 / A909 / CDC SS700) protein is Holliday junction branch migration complex subunit RuvB.